Here is a 480-residue protein sequence, read N- to C-terminus: Mannose-1-phosphate guanylyltransferase ManC (480 aa).

This sequence belongs to the mannose-6-phosphate isomerase type 2 family.

The catalysed reaction is alpha-D-mannose 1-phosphate + GTP + H(+) = GDP-alpha-D-mannose + diphosphate. It participates in nucleotide-sugar biosynthesis; GDP-alpha-D-mannose biosynthesis; GDP-alpha-D-mannose from alpha-D-mannose 1-phosphate (GTP route): step 1/1. Its function is as follows. Involved in the biosynthesis of the capsular polysaccharide colanic acid. This is Mannose-1-phosphate guanylyltransferase ManC (manC) from Salmonella typhimurium (strain LT2 / SGSC1412 / ATCC 700720).